Reading from the N-terminus, the 204-residue chain is Urease accessory protein UreG (204 aa).

GTP is bound at residue 11-18 (GPVGAGKT).

Belongs to the SIMIBI class G3E GTPase family. UreG subfamily. As to quaternary structure, homodimer. UreD, UreF and UreG form a complex that acts as a GTP-hydrolysis-dependent molecular chaperone, activating the urease apoprotein by helping to assemble the nickel containing metallocenter of UreC. The UreE protein probably delivers the nickel.

The protein resides in the cytoplasm. Its function is as follows. Facilitates the functional incorporation of the urease nickel metallocenter. This process requires GTP hydrolysis, probably effectuated by UreG. This is Urease accessory protein UreG from Staphylococcus aureus (strain Mu3 / ATCC 700698).